The following is a 548-amino-acid chain: Rhodopsin kinase grk7-b (548 aa).

S33 is modified (phosphoserine; by PKA). The region spanning 53-172 (FEDICEQQPI…QTSLFFDRFV (120 aa)) is the RGS domain. The region spanning 187–446 (FYEFRTLGKG…NDDPRKHEFF (260 aa)) is the Protein kinase domain. ATP-binding positions include 193–201 (LGKGGFGEV) and K216. D312 (proton acceptor) is an active-site residue. An AGC-kinase C-terminal domain is found at 447 to 512 (KSINFPRLEA…GVVPIAWQQE (66 aa)). The disordered stretch occupies residues 520–548 (DELSDPNRKESAAGLEDEEQQKSKSCTLL). C545 carries the cysteine methyl ester modification. C545 is lipidated: S-geranylgeranyl cysteine. A propeptide spans 546 to 548 (TLL) (removed in mature form).

The protein belongs to the protein kinase superfamily. AGC Ser/Thr protein kinase family. GPRK subfamily. In terms of processing, phosphorylation at Ser-33 is regulated by light and activated by cAMP. In terms of tissue distribution, expressed in the eyes (at protein level). Expressed in the eyes, the pineal gland and in the brain.

The protein localises to the membrane. The enzyme catalyses L-threonyl-[rhodopsin] + ATP = O-phospho-L-threonyl-[rhodopsin] + ADP + H(+). The catalysed reaction is L-seryl-[rhodopsin] + ATP = O-phospho-L-seryl-[rhodopsin] + ADP + H(+). Retina-specific kinase involved in the shutoff of the photoresponse and adaptation to changing light conditions via cone opsin phosphorylation, including rhodopsin (RHO). This chain is Rhodopsin kinase grk7-b (grk7b), found in Danio rerio (Zebrafish).